Reading from the N-terminus, the 89-residue chain is Small ribosomal subunit protein uS15 (89 aa).

The protein belongs to the universal ribosomal protein uS15 family. Part of the 30S ribosomal subunit. Forms a bridge to the 50S subunit in the 70S ribosome, contacting the 23S rRNA.

Functionally, one of the primary rRNA binding proteins, it binds directly to 16S rRNA where it helps nucleate assembly of the platform of the 30S subunit by binding and bridging several RNA helices of the 16S rRNA. Its function is as follows. Forms an intersubunit bridge (bridge B4) with the 23S rRNA of the 50S subunit in the ribosome. This Rhizobium leguminosarum bv. trifolii (strain WSM2304) protein is Small ribosomal subunit protein uS15.